Consider the following 209-residue polypeptide: Large ribosomal subunit protein uL3 (209 aa).

The tract at residues 121–154 is disordered; that stretch reads GGIKRHNFHRGPMAHGSKYHRRPGSSAAKGPART.

The protein belongs to the universal ribosomal protein uL3 family. Part of the 50S ribosomal subunit. Forms a cluster with proteins L14 and L19.

Functionally, one of the primary rRNA binding proteins, it binds directly near the 3'-end of the 23S rRNA, where it nucleates assembly of the 50S subunit. The chain is Large ribosomal subunit protein uL3 from Desulforamulus reducens (strain ATCC BAA-1160 / DSM 100696 / MI-1) (Desulfotomaculum reducens).